A 449-amino-acid chain; its full sequence is Tubulin beta-4 chain (449 aa).

Positions 1–4 (MREI) match the MREI motif motif. GTP-binding residues include Q11, E69, S138, G142, T143, G144, N204, and N226. E69 contacts Mg(2+). The segment at 421–449 (EYQQYQDATAEEEGEMYEDDEEESEQGAK) is disordered. Positions 429 to 449 (TAEEEGEMYEDDEEESEQGAK) are enriched in acidic residues. E438 carries the 5-glutamyl polyglutamate modification. S444 carries the post-translational modification Phosphoserine.

Belongs to the tubulin family. In terms of assembly, dimer of alpha and beta chains. A typical microtubule is a hollow water-filled tube with an outer diameter of 25 nm and an inner diameter of 15 nM. Alpha-beta heterodimers associate head-to-tail to form protofilaments running lengthwise along the microtubule wall with the beta-tubulin subunit facing the microtubule plus end conferring a structural polarity. Microtubules usually have 13 protofilaments but different protofilament numbers can be found in some organisms and specialized cells. The cofactor is Mg(2+). Some glutamate residues at the C-terminus are polyglycylated, resulting in polyglycine chains on the gamma-carboxyl group. Glycylation is mainly limited to tubulin incorporated into axonemes (cilia and flagella) whereas glutamylation is prevalent in neuronal cells, centrioles, axonemes, and the mitotic spindle. Both modifications can coexist on the same protein on adjacent residues, and lowering polyglycylation levels increases polyglutamylation, and reciprocally. The precise function of polyglycylation is still unclear. In terms of processing, some glutamate residues at the C-terminus are polyglutamylated, resulting in polyglutamate chains on the gamma-carboxyl group. Polyglutamylation plays a key role in microtubule severing by spastin (SPAST). SPAST preferentially recognizes and acts on microtubules decorated with short polyglutamate tails: severing activity by SPAST increases as the number of glutamates per tubulin rises from one to eight, but decreases beyond this glutamylation threshold. In terms of tissue distribution, neuron specific.

Its subcellular location is the cytoplasm. It localises to the cytoskeleton. Functionally, tubulin is the major constituent of microtubules, a cylinder consisting of laterally associated linear protofilaments composed of alpha- and beta-tubulin heterodimers. Microtubules grow by the addition of GTP-tubulin dimers to the microtubule end, where a stabilizing cap forms. Below the cap, tubulin dimers are in GDP-bound state, owing to GTPase activity of alpha-tubulin. The polypeptide is Tubulin beta-4 chain (Gallus gallus (Chicken)).